A 344-amino-acid chain; its full sequence is L-rhamnose-proton symporter (344 aa).

Helical transmembrane passes span 4–24 (AIIL…CFYA), 38–58 (WSIG…YLLL), 68–88 (FSIA…IGNI), 101–121 (MGIG…TPIL), 137–157 (TLLG…AGLL), 175–195 (LILA…MDAA), 207–227 (INSL…GAII), 259–279 (ILFS…YAWG), 290–310 (MSWM…GLLL), and 321–341 (VAVL…VGLG).

The protein belongs to the L-rhamnose transporter (TC 2.A.7.6) family.

It localises to the cell inner membrane. The enzyme catalyses L-rhamnopyranose(in) + H(+)(in) = L-rhamnopyranose(out) + H(+)(out). Functionally, uptake of L-rhamnose across the cytoplasmic membrane with the concomitant transport of protons into the cell (symport system). The protein is L-rhamnose-proton symporter of Yersinia pseudotuberculosis serotype O:1b (strain IP 31758).